Here is a 264-residue protein sequence, read N- to C-terminus: Zinc finger protein CG30 (264 aa).

An RING-type zinc finger spans residues 8–63 (CNICFSVAEIKNYFLQPIDRLTIIPVLELDTCKHQLCSMCIRKIRKRKKVPCPLCR).

The protein localises to the host nucleus. Plays a role in the proper expression of late and very late genes. This is Zinc finger protein CG30 (CG30) from Autographa californica nuclear polyhedrosis virus (AcMNPV).